Reading from the N-terminus, the 139-residue chain is Putative pre-16S rRNA nuclease (139 aa).

The protein belongs to the YqgF nuclease family.

The protein localises to the cytoplasm. Functionally, could be a nuclease involved in processing of the 5'-end of pre-16S rRNA. The chain is Putative pre-16S rRNA nuclease from Pectobacterium carotovorum subsp. carotovorum (strain PC1).